Here is a 1207-residue protein sequence, read N- to C-terminus: Ras GTPase-activating protein gap-2 (1207 aa).

2 disordered regions span residues 1 to 29 and 221 to 316; these read MKVI…SCTK and RMSS…GSLR. In terms of domain architecture, PH spans 40 to 383; that stretch reads PPICHGWLIV…WMENLRKTMN (344 aa). Over residues 223–236 the composition is skewed to low complexity; sequence SSSSHNLSTRLSGS. Polar residues-rich tracts occupy residues 237–247 and 286–297; these read TQNLNQPTNAY and ASNTPSRDSSLY. A C2 domain is found at 374-490; that stretch reads WMENLRKTMN…SSRSPVERWY (117 aa). A compositionally biased stretch (polar residues) spans 495-504; the sequence is SHSDSGTSRI. Residues 495 to 516 are disordered; it reads SHSDSGTSRIASALGGKSSSQE. Residues 579–789 enclose the Ras-GAP domain; that stretch reads NLAKEFLCDL…HRMKDFLLRI (211 aa). 4 disordered regions span residues 856–903, 923–1013, 1086–1107, and 1163–1207; these read GVFH…LGRS, FQTP…SSSS, ATGG…RASR, and LKSK…VVPN. 2 stretches are compositionally biased toward polar residues: residues 862–876 and 891–903; these read MVQQ…SPQQ and TPPT…LGRS. Over residues 939-953 the composition is skewed to low complexity; the sequence is TGTSSSRTSDKTTSS. Residues 955–972 show a composition bias toward basic and acidic residues; it reads EIRDDTDSDFELREDRGR. Low complexity predominate over residues 985–1013; it reads ASPSSSQQASSGYLSNNPSRSSYSNSSSS. The span at 1181–1207 shows a compositional bias: low complexity; it reads SGASEDSYDSLSSLDRPSRQSLVVVPN.

In terms of tissue distribution, mainly expressed in gonads and vulval cells. Isoform c in expressed in pharyngeal epithelial cells and several rectal/blast cells in the tail region. Isoform f is weakly expressed in four cells symmetrically located in the vulval region. Isoform g is strongly expressed in the pharyngeal muscle cells m6 in addition to several cells in the tail region.

The protein resides in the cytoplasm. In terms of biological role, GTPase-activating protein, which acts as a negative regulator for the member of the Ras family let-60. Probably decreases the signaling activity of Ras by stimulating its intrinsic GTPase activity, thereby lowering the levels of GTP-bound, active Ras. The different isoforms may play a distinct role in specific tissues. The polypeptide is Ras GTPase-activating protein gap-2 (gap-2) (Caenorhabditis elegans).